The chain runs to 632 residues: Mediator of RNA polymerase II transcription subunit 17 (632 aa).

Disordered stretches follow at residues 1-21 (MSDS…RPDS) and 50-72 (EDKH…DLET). The span at 11–21 (PIREKRDRPDS) shows a compositional bias: basic and acidic residues. Positions 58 to 72 (EEDDEGDKESTDLET) are enriched in acidic residues.

Belongs to the Mediator complex subunit 17 family. Component of the Mediator complex.

It localises to the nucleus. Functionally, component of the Mediator complex, a coactivator involved in the regulated transcription of nearly all RNA polymerase II-dependent genes. Mediator functions as a bridge to convey information from gene-specific regulatory proteins to the basal RNA polymerase II transcription machinery. Mediator is recruited to promoters by direct interactions with regulatory proteins and serves as a scaffold for the assembly of a functional preinitiation complex with RNA polymerase II and the general transcription factors. This chain is Mediator of RNA polymerase II transcription subunit 17 (srb4), found in Emericella nidulans (strain FGSC A4 / ATCC 38163 / CBS 112.46 / NRRL 194 / M139) (Aspergillus nidulans).